We begin with the raw amino-acid sequence, 224 residues long: RNA-free ribonuclease P (224 aa).

It belongs to the HARP family.

The catalysed reaction is Endonucleolytic cleavage of RNA, removing 5'-extranucleotides from tRNA precursor.. Functionally, RNA-free RNase P that catalyzes the removal of the 5'-leader sequence from pre-tRNA to produce the mature 5'-terminus. The sequence is that of RNA-free ribonuclease P from Haloarcula marismortui (strain ATCC 43049 / DSM 3752 / JCM 8966 / VKM B-1809) (Halobacterium marismortui).